Consider the following 328-residue polypeptide: Cytochrome f (328 aa).

An N-terminal signal peptide occupies residues 1-44 (MRTFNFLSFPQVHRQALVKAVLVAIATVSLLLTSDVINPQSAQA). 4 residues coordinate heme: Tyr-45, Cys-66, Cys-69, and His-70. A helical membrane pass occupies residues 294-314 (IKGLVLFLGGIMLCQILLVIK).

It belongs to the cytochrome f family. The 4 large subunits of the cytochrome b6-f complex are cytochrome b6, subunit IV (17 kDa polypeptide, PetD), cytochrome f and the Rieske protein, while the 4 small subunits are PetG, PetL, PetM and PetN. The complex functions as a dimer. The cofactor is heme.

The protein localises to the cellular thylakoid membrane. Functionally, component of the cytochrome b6-f complex, which mediates electron transfer between photosystem II (PSII) and photosystem I (PSI), cyclic electron flow around PSI, and state transitions. This is Cytochrome f from Microcystis aeruginosa (strain NIES-843 / IAM M-2473).